We begin with the raw amino-acid sequence, 285 residues long: Bifunctional protein FolD (285 aa).

Residues 165 to 167 (GRS), Ser190, and Ile231 contribute to the NADP(+) site.

This sequence belongs to the tetrahydrofolate dehydrogenase/cyclohydrolase family. In terms of assembly, homodimer.

The catalysed reaction is (6R)-5,10-methylene-5,6,7,8-tetrahydrofolate + NADP(+) = (6R)-5,10-methenyltetrahydrofolate + NADPH. It catalyses the reaction (6R)-5,10-methenyltetrahydrofolate + H2O = (6R)-10-formyltetrahydrofolate + H(+). The protein operates within one-carbon metabolism; tetrahydrofolate interconversion. Functionally, catalyzes the oxidation of 5,10-methylenetetrahydrofolate to 5,10-methenyltetrahydrofolate and then the hydrolysis of 5,10-methenyltetrahydrofolate to 10-formyltetrahydrofolate. In Verminephrobacter eiseniae (strain EF01-2), this protein is Bifunctional protein FolD.